We begin with the raw amino-acid sequence, 200 residues long: Probable fatty acid desaturase MIMI_L630 (200 aa).

Transmembrane regions (helical) follow at residues Phe-9–Ile-29 and Ile-79–Ile-99.

It belongs to the fatty acid desaturase CarF family.

The protein resides in the membrane. This Acanthamoeba polyphaga mimivirus (APMV) protein is Probable fatty acid desaturase MIMI_L630.